The sequence spans 122 residues: MIQPQTYLNVADNSGAKKPMCIRILKASNRKYANTGNVIVAVVKEAVPNMPLRKSEIVRAVVVRTCKELKRNNGMIIQFDDNAAVIINQEGNPRGTRVFGPVARESREFNFTKIVSLAPEVL.

This sequence belongs to the universal ribosomal protein uL14 family. In terms of assembly, part of the 50S ribosomal subunit.

It localises to the plastid. The protein localises to the chloroplast. Functionally, binds to 23S rRNA. In Huperzia lucidula (Shining clubmoss), this protein is Large ribosomal subunit protein uL14c.